Here is a 153-residue protein sequence, read N- to C-terminus: Large-conductance mechanosensitive channel (153 aa).

The next 2 membrane-spanning stretches (helical) occupy residues 16-36 (VIDL…VKSL) and 88-108 (GLFI…FMLV).

It belongs to the MscL family. As to quaternary structure, homopentamer.

It is found in the cell inner membrane. Channel that opens in response to stretch forces in the membrane lipid bilayer. May participate in the regulation of osmotic pressure changes within the cell. In Chromobacterium violaceum (strain ATCC 12472 / DSM 30191 / JCM 1249 / CCUG 213 / NBRC 12614 / NCIMB 9131 / NCTC 9757 / MK), this protein is Large-conductance mechanosensitive channel.